The primary structure comprises 557 residues: Formate--tetrahydrofolate ligase 2 (557 aa).

66–73 is an ATP binding site; the sequence is TPAGEGKT.

Belongs to the formate--tetrahydrofolate ligase family.

The catalysed reaction is (6S)-5,6,7,8-tetrahydrofolate + formate + ATP = (6R)-10-formyltetrahydrofolate + ADP + phosphate. It functions in the pathway one-carbon metabolism; tetrahydrofolate interconversion. This chain is Formate--tetrahydrofolate ligase 2, found in Streptococcus pyogenes serotype M4 (strain MGAS10750).